Consider the following 134-residue polypeptide: Cytochrome c-550 (134 aa).

Residue Gln-1 is modified to Pyrrolidone carboxylic acid. Residues Cys-15, Cys-18, His-19, and Met-100 each contribute to the heme c site.

Binds 1 heme c group covalently per subunit.

Its function is as follows. Electron donor for nitrous-oxide reductase. This is Cytochrome c-550 from Paracoccus pantotrophus (Thiosphaera pantotropha).